A 451-amino-acid chain; its full sequence is Chaperone SurA (451 aa).

The N-terminal stretch at 1–26 (MKKIIPTNLFKLISILFILTPFFAWS) is a signal peptide. PpiC domains lie at 179-280 (DVEY…QLQG) and 290-388 (KQYH…FLDG).

It localises to the periplasm. The catalysed reaction is [protein]-peptidylproline (omega=180) = [protein]-peptidylproline (omega=0). Its function is as follows. Chaperone involved in the correct folding and assembly of outer membrane proteins. Recognizes specific patterns of aromatic residues and the orientation of their side chains, which are found more frequently in integral outer membrane proteins. May act in both early periplasmic and late outer membrane-associated steps of protein maturation. The chain is Chaperone SurA from Hydrogenovibrio crunogenus (strain DSM 25203 / XCL-2) (Thiomicrospira crunogena).